We begin with the raw amino-acid sequence, 125 residues long: Small ribosomal subunit protein uS12 (125 aa).

A disordered region spans residues 1-26 (MPTINQLVRKSRKTVKAQSDSPALKN). At Asp-89 the chain carries 3-methylthioaspartic acid.

Belongs to the universal ribosomal protein uS12 family. In terms of assembly, part of the 30S ribosomal subunit. Contacts proteins S8 and S17. May interact with IF1 in the 30S initiation complex.

With S4 and S5 plays an important role in translational accuracy. Functionally, interacts with and stabilizes bases of the 16S rRNA that are involved in tRNA selection in the A site and with the mRNA backbone. Located at the interface of the 30S and 50S subunits, it traverses the body of the 30S subunit contacting proteins on the other side and probably holding the rRNA structure together. The combined cluster of proteins S8, S12 and S17 appears to hold together the shoulder and platform of the 30S subunit. This Clostridium tetani (strain Massachusetts / E88) protein is Small ribosomal subunit protein uS12.